A 471-amino-acid polypeptide reads, in one-letter code: Ribulose bisphosphate carboxylase large chain (471 aa).

Positions 119 and 169 each coordinate substrate. Lys-171 acts as the Proton acceptor in catalysis. Residue Lys-173 coordinates substrate. 3 residues coordinate Mg(2+): Lys-197, Asp-199, and Glu-200. Lys-197 carries the N6-carboxylysine modification. His-290 acts as the Proton acceptor in catalysis. 3 residues coordinate substrate: Arg-291, His-323, and Ser-375.

Belongs to the RuBisCO large chain family. Type I subfamily. As to quaternary structure, heterohexadecamer of 8 large chains and 8 small chains; disulfide-linked. The disulfide link is formed within the large subunit homodimers. Mg(2+) serves as cofactor. The disulfide bond which can form in the large chain dimeric partners within the hexadecamer appears to be associated with oxidative stress and protein turnover.

Its subcellular location is the carboxysome. It catalyses the reaction 2 (2R)-3-phosphoglycerate + 2 H(+) = D-ribulose 1,5-bisphosphate + CO2 + H2O. The catalysed reaction is D-ribulose 1,5-bisphosphate + O2 = 2-phosphoglycolate + (2R)-3-phosphoglycerate + 2 H(+). Its function is as follows. RuBisCO catalyzes two reactions: the carboxylation of D-ribulose 1,5-bisphosphate, the primary event in carbon dioxide fixation, as well as the oxidative fragmentation of the pentose substrate in the photorespiration process. Both reactions occur simultaneously and in competition at the same active site. In Crocosphaera subtropica (strain ATCC 51142 / BH68) (Cyanothece sp. (strain ATCC 51142)), this protein is Ribulose bisphosphate carboxylase large chain.